A 386-amino-acid polypeptide reads, in one-letter code: MGSKGDNVAVCNMKLERLLSMKGGKGQDSYANNSQAQAMHARSMLHLLEETLENVHLNSSASPPPFTAVDLGCSSGANTVHIIDFIVKHISKRFDAAGIDPPEFTAFFSDLPSNDFNTLFQLLPPLVSNTCMEECLAADGNRSYFVAGVPGSFYRRLFPARTIDFFHSAFSLHWLSQVPESVTDRRSAAYNRGRVFIHGAGEKTTTAYKRQFQADLAEFLRARAAEVKRGGAMFLVCLGRTSVDPTDQGGAGLLFGTHFQDAWDDLVREGLVAAEKRDGFNIPVYAPSLQDFKEVVDANGSFAIDKLVVYKGGSPLVVNEPDDASEVGRAFASSCRSVAGVLVEAHIGEELSNKLFSRVESRATSHAKDVLVNLQFFHIVASLSFT.

Y30 serves as a coordination point for S-adenosyl-L-methionine. Residues Y30 and 33–37 (NSQAQ) each bind substrate. Residues G72, 72-73 (GC), N78, 108-111 (FSDL), D110, 152-154 (SFY), and 169-171 (AFS) each bind S-adenosyl-L-methionine. Residue 170 to 174 (FSLHW) participates in substrate binding. Mg(2+)-binding residues include N191, V195, R277, D278, F280, and N281. Substrate is bound at residue S334.

The protein belongs to the methyltransferase superfamily. SABATH family. As to quaternary structure, homodimer. It depends on Mg(2+) as a cofactor. Expressed in seedling roots and leaves. Expressed in the stigma, funiculus, and vascular bundles in sepals, petals and stamens.

It catalyses the reaction (indol-3-yl)acetate + S-adenosyl-L-methionine = methyl (indol-3-yl)acetate + S-adenosyl-L-homocysteine. Its function is as follows. Catalyzes the methylation of the free carboxyl end of the plant hormone indole-3-acetic acid (IAA). Converts IAA to IAA methyl ester (MeIAA). Regulates IAA activities by IAA methylation. Methylation of IAA plays an important role in regulating plant development and auxin homeostasis. Required for correct leaf pattern formation. MeIAA seems to be an inactive form of IAA. The chain is Indole-3-acetate O-methyltransferase 1 (IAMT1) from Arabidopsis thaliana (Mouse-ear cress).